The chain runs to 429 residues: Ribosomal RNA small subunit methyltransferase B (429 aa).

S-adenosyl-L-methionine-binding positions include 254–260 (CAAPGGK), D277, D303, and D322. C375 (nucleophile) is an active-site residue. Residues 397–419 (ALSETGTPDQPGQQNLPGGEEGD) are disordered. Positions 400–412 (ETGTPDQPGQQNL) are enriched in polar residues.

It belongs to the class I-like SAM-binding methyltransferase superfamily. RsmB/NOP family.

It is found in the cytoplasm. The enzyme catalyses cytidine(967) in 16S rRNA + S-adenosyl-L-methionine = 5-methylcytidine(967) in 16S rRNA + S-adenosyl-L-homocysteine + H(+). In terms of biological role, specifically methylates the cytosine at position 967 (m5C967) of 16S rRNA. In Salmonella typhi, this protein is Ribosomal RNA small subunit methyltransferase B.